A 450-amino-acid chain; its full sequence is Dol-P-Glc:Glc(2)Man(9)GlcNAc(2)-PP-Dol alpha-1,2-glucosyltransferase (450 aa).

A helical membrane pass occupies residues I12–F32. An N-linked (GlcNAc...) asparagine glycan is attached at N34. Transmembrane regions (helical) follow at residues Y158–I178, A190–I210, L243–I263, and I273–P293. An N-linked (GlcNAc...) asparagine glycan is attached at N297. The next 4 membrane-spanning stretches (helical) occupy residues I312–V332, L357–I377, F384–F404, and F429–I449.

The protein belongs to the ALG10 glucosyltransferase family.

The protein localises to the endoplasmic reticulum membrane. The catalysed reaction is an alpha-D-Glc-(1-&gt;3)-alpha-D-Glc-(1-&gt;3)-alpha-D-Man-(1-&gt;2)-alpha-D-Man-(1-&gt;2)-alpha-D-Man-(1-&gt;3)-[alpha-D-Man-(1-&gt;2)-alpha-D-Man-(1-&gt;3)-[alpha-D-Man-(1-&gt;2)-alpha-D-Man-(1-&gt;6)]-alpha-D-Man-(1-&gt;6)]-beta-D-Man-(1-&gt;4)-beta-D-GlcNAc-(1-&gt;4)-alpha-D-GlcNAc-diphospho-di-trans,poly-cis-dolichol + a di-trans,poly-cis-dolichyl beta-D-glucosyl phosphate = a alpha-D-Glc-(1-&gt;2)-alpha-D-Glc-(1-&gt;3)-alpha-D-Glc-(1-&gt;3)-alpha-D-Man-(1-&gt;2)-alpha-D-Man-(1-&gt;2)-alpha-D-Man-(1-&gt;3)-[alpha-D-Man-(1-&gt;2)-alpha-D-Man-(1-&gt;3)-[alpha-D-Man-(1-&gt;2)-alpha-D-Man-(1-&gt;6)]-alpha-D-Man-(1-&gt;6)]-beta-D-Man-(1-&gt;4)-beta-D-GlcNAc-(1-&gt;4)-alpha-D-GlcNAc-diphospho-di-trans,poly-cis-dolichol + a di-trans,poly-cis-dolichyl phosphate + H(+). It functions in the pathway protein modification; protein glycosylation. Functionally, dol-P-Glc:Glc(2)Man(9)GlcNAc(2)-PP-Dol alpha-1,2-glucosyltransferase that operates in the biosynthetic pathway of dolichol-linked oligosaccharides, the glycan precursors employed in protein asparagine (N)-glycosylation. The assembly of dolichol-linked oligosaccharides begins on the cytosolic side of the endoplasmic reticulum membrane and finishes in its lumen. The sequential addition of sugars to dolichol pyrophosphate produces dolichol-linked oligosaccharides containing fourteen sugars, including two GlcNAcs, nine mannoses and three glucoses. Once assembled, the oligosaccharide is transferred from the lipid to nascent proteins by oligosaccharyltransferases. In the lumen of the endoplasmic reticulum, adds the third and last glucose residue from dolichyl phosphate glucose (Dol-P-Glc) onto the lipid-linked oligosaccharide intermediate Glc(2)Man(9)GlcNAc(2)-PP-Dol to produce Glc(3)Man(9)GlcNAc(2)-PP-Dol. In Candida albicans (strain SC5314 / ATCC MYA-2876) (Yeast), this protein is Dol-P-Glc:Glc(2)Man(9)GlcNAc(2)-PP-Dol alpha-1,2-glucosyltransferase (DIE2).